We begin with the raw amino-acid sequence, 161 residues long: Protein-lysine N-methyltransferase (161 aa).

The DxGxGxG SAM-binding motif signature appears at 34-40; the sequence is DLGCGDG.

It belongs to the class I-like SAM-binding methyltransferase superfamily. Monomer.

The catalysed reaction is L-lysyl-[protein] + S-adenosyl-L-methionine = N(6)-methyl-L-lysyl-[protein] + S-adenosyl-L-homocysteine + H(+). Its function is as follows. Catalyzes the methylation of lysine residues in target proteins, using S-adenosyl-L-methionine (SAM) as the methyl donor. Exhibits broad substrate specificity, being able to methylate the crenarchaeal chromatin protein Cren7 primarily at 'Lys-11', 'Lys-16' and 'Lys-31', as well as a number of recombinant Sulfolobus proteins in vitro. Methylates lysine residues in a rather sequence-independent manner. In Saccharolobus islandicus (strain REY15A) (Sulfolobus islandicus), this protein is Protein-lysine N-methyltransferase.